The chain runs to 462 residues: Zinc transporter zipt-7.2 (462 aa).

The chain crosses the membrane as a helical span at residues 2–22 (LVKSCIFLSFLAIAAYGQAHL). Positions 39–134 (HHQGHGHAHG…HGHSHGAESA (96 aa)) are disordered. Positions 40–51 (HQGHGHAHGGHG) are enriched in basic residues. Positions 65-74 (AAAAEAATAA) are enriched in low complexity. Over residues 75–94 (AHDHGHAHDHDHGHAHDHGH) the composition is skewed to basic and acidic residues. A compositionally biased stretch (basic residues) spans 111-120 (HGHAHDHHGH). Positions 121 to 132 (SHEDHGHSHGAE) are enriched in basic and acidic residues. A helical membrane pass occupies residues 161-181 (AISATLLISAAPCFILMFIPI). Asparagine 184 carries an N-linked (GlcNAc...) asparagine glycan. The chain crosses the membrane as a helical span at residues 194-214 (VLLAFGSGGLLGDAFLHLIPH). Residues 219 to 239 (GDGHGHSHSHGHSHGGGGHSH) form a disordered region. A helical transmembrane segment spans residues 244 to 264 (MSVGGWVLGGIIAFLTVEKLV). The tract at residues 270–307 (EDGHGHSHGHSHGGEKKETKEKDSKDKVAKKEEKPEKD) is disordered. Over residues 281–307 (HGGEKKETKEKDSKDKVAKKEEKPEKD) the composition is skewed to basic and acidic residues. The N-linked (GlcNAc...) asparagine glycan is linked to asparagine 326. The next 3 membrane-spanning stretches (helical) occupy residues 333–353 (IGASFIAGTTVGIVTMITVLV), 376–396 (AMLIQLVTALGALSGCVISLF), and 410–430 (SWVLPFTAGGFIYIATVSVIP). Asparagine 435 is a glycosylation site (N-linked (GlcNAc...) asparagine). The chain crosses the membrane as a helical span at residues 441 to 461 (TVKEIFAILTGIFLMYLIAIY).

The protein belongs to the ZIP transporter (TC 2.A.5) family. KE4/Catsup subfamily. In terms of tissue distribution, expressed in somatic tissues.

It is found in the membrane. Its function is as follows. Zinc transporter. This chain is Zinc transporter zipt-7.2, found in Caenorhabditis elegans.